The primary structure comprises 77 residues: U8-lycotoxin-Ls1m (77 aa).

Positions 1–20 are cleaved as a signal peptide; that stretch reads MKLMIFTGLVLFAIVSLIEA. A propeptide spanning residues 21–26 is cleaved from the precursor; sequence QAENEK.

The protein belongs to the neurotoxin 19 (CSTX) family. 08 (U8-Lctx) subfamily. In terms of processing, contains 4 disulfide bonds. Expressed by the venom gland.

It localises to the secreted. The sequence is that of U8-lycotoxin-Ls1m from Lycosa singoriensis (Wolf spider).